Here is a 105-residue protein sequence, read N- to C-terminus: UPF0148 protein PYRAB12700 (105 aa).

The protein belongs to the UPF0148 family.

This Pyrococcus abyssi (strain GE5 / Orsay) protein is UPF0148 protein PYRAB12700.